Here is a 796-residue protein sequence, read N- to C-terminus: uncharacterized protein (796 aa).

It localises to the mitochondrion. This is an uncharacterized protein from Dictyostelium discoideum (Social amoeba).